Reading from the N-terminus, the 196-residue chain is Inner membrane protein YdjM (196 aa).

Residues 1 to 23 (MTAEGHLLFSIACAVFAKNAELT) are Periplasmic-facing. The chain crosses the membrane as a helical span at residues 24 to 44 (PVLAQGDWWHIVPSAILTCLL). Over 45–77 (PDIDHPKSFLGQRLKWISKPIARAFGHRGFTHS) the chain is Cytoplasmic. A helical membrane pass occupies residues 78–98 (LLAVFALLATFYLKVPEGWFI). Over 99 to 106 (PADALQGM) the chain is Periplasmic. A helical membrane pass occupies residues 107 to 127 (VLGYLSHILADMLTPAGVPLL). The Cytoplasmic portion of the chain corresponds to 128-149 (WPCRWRFRLPILVPQKGNQLER). The chain crosses the membrane as a helical span at residues 150-170 (FICMALFVWSVWMPHSLPENS). Over 171–196 (AVRWSSQMINTLQIQFHRLIKHQVEY) the chain is Periplasmic.

This sequence to B.subtilis YvsG.

It is found in the cell inner membrane. The polypeptide is Inner membrane protein YdjM (ydjM) (Escherichia coli (strain K12)).